Reading from the N-terminus, the 309-residue chain is Homoserine O-acetyltransferase (309 aa).

Cys142 (acyl-thioester intermediate) is an active-site residue. Substrate contacts are provided by Lys163 and Ser192. Residue His235 is the Proton acceptor of the active site. Glu237 is a catalytic residue. Substrate is bound at residue Arg249.

Belongs to the MetA family.

The protein localises to the cytoplasm. The catalysed reaction is L-homoserine + acetyl-CoA = O-acetyl-L-homoserine + CoA. It functions in the pathway amino-acid biosynthesis; L-methionine biosynthesis via de novo pathway; O-acetyl-L-homoserine from L-homoserine: step 1/1. Functionally, transfers an acetyl group from acetyl-CoA to L-homoserine, forming acetyl-L-homoserine. This chain is Homoserine O-acetyltransferase, found in Petrotoga mobilis (strain DSM 10674 / SJ95).